A 719-amino-acid chain; its full sequence is MSDISVEKLTELEAAAELERLARAIAHHDELYHAKDRPEISDAAYDALKRRNEAIEAHFPALVRDDSPSRRVGAAPALATFAPVVHARPMLSLDNAFSDEDVRDFVGSVYRFLGQLPDDSIAFTAEPKIDGLSMSIRYENGILVSGATRGDGTTGENVTANIRTIAEIPNRLPAGAPAVVEVRGEVYMAKSDFLTLNAQMAAEGKQTYVNPRNTAAGSLRQLDAKVTASRKLRFFAYAWGEMSDMPADTQLGMVEVFRQWGFPVNPLMKRFNSVDGLLAHYRAIGMERPTLDYDIDGVVYKVDRLDLQTRLGFRSRSPRWAIAHKFPAEQALTILRGIDIQVGRTGALTPVARLEPITVGGVVVTNATLHNEDYIKGIGQKGEPIREGRDIRIGDSVIVQRAGDVIPQIVDVVLEEGKKRGEPYQFPHVCPACGSHAVREEGEAVRRCTGGLICPAQAVERIRHFVSRNAFDIEGLGEKQVEFFFNAEDPALCIRSPADIFTLKKRQENSLTKLQNIEGFGATSVKKLYDAIDARREIALHRFLFGLGIRHVGEVNAKRLARAYLSYAAFEKAALEAVPPKEGDRTDKGSEAWQDMLAVEGIGSIVAEAVVDFYGEPHNREVLAALLAEVTPLDEEARVATGSPVEGKTVVFTGSLERMSRDEAKAMAERHGAKTAGSVSKKTDLVVAGPGAGSKLAKATELGIEVINEDDWFKLVGED.

Residues 42–46 (DAAYD), 92–93 (SL), and glutamate 126 contribute to the NAD(+) site. Lysine 128 serves as the catalytic N6-AMP-lysine intermediate. Arginine 149, glutamate 185, lysine 301, and lysine 325 together coordinate NAD(+). Zn(2+) is bound by residues cysteine 430, cysteine 433, cysteine 448, and cysteine 454. Residues 640-719 (ATGSPVEGKT…DDWFKLVGED (80 aa)) enclose the BRCT domain.

Belongs to the NAD-dependent DNA ligase family. LigA subfamily. Requires Mg(2+) as cofactor. The cofactor is Mn(2+).

It catalyses the reaction NAD(+) + (deoxyribonucleotide)n-3'-hydroxyl + 5'-phospho-(deoxyribonucleotide)m = (deoxyribonucleotide)n+m + AMP + beta-nicotinamide D-nucleotide.. Its function is as follows. DNA ligase that catalyzes the formation of phosphodiester linkages between 5'-phosphoryl and 3'-hydroxyl groups in double-stranded DNA using NAD as a coenzyme and as the energy source for the reaction. It is essential for DNA replication and repair of damaged DNA. The sequence is that of DNA ligase from Brucella melitensis biotype 2 (strain ATCC 23457).